The following is a 501-amino-acid chain: Aspartyl/glutamyl-tRNA(Asn/Gln) amidotransferase subunit B (501 aa).

The disordered stretch occupies residues 276-299 (HYQEADGSTSKGRPKETAEDYRYF). A compositionally biased stretch (basic and acidic residues) spans 288–299 (RPKETAEDYRYF).

Belongs to the GatB/GatE family. GatB subfamily. Heterotrimer of A, B and C subunits.

The catalysed reaction is L-glutamyl-tRNA(Gln) + L-glutamine + ATP + H2O = L-glutaminyl-tRNA(Gln) + L-glutamate + ADP + phosphate + H(+). The enzyme catalyses L-aspartyl-tRNA(Asn) + L-glutamine + ATP + H2O = L-asparaginyl-tRNA(Asn) + L-glutamate + ADP + phosphate + 2 H(+). Functionally, allows the formation of correctly charged Asn-tRNA(Asn) or Gln-tRNA(Gln) through the transamidation of misacylated Asp-tRNA(Asn) or Glu-tRNA(Gln) in organisms which lack either or both of asparaginyl-tRNA or glutaminyl-tRNA synthetases. The reaction takes place in the presence of glutamine and ATP through an activated phospho-Asp-tRNA(Asn) or phospho-Glu-tRNA(Gln). The sequence is that of Aspartyl/glutamyl-tRNA(Asn/Gln) amidotransferase subunit B from Corynebacterium glutamicum (strain R).